A 303-amino-acid chain; its full sequence is Geranylgeranyl pyrophosphate synthase (303 aa).

Positions 30, 33, and 62 each coordinate isopentenyl diphosphate. Asp-69 and Asp-73 together coordinate Mg(2+). Arg-78 provides a ligand contact to dimethylallyl diphosphate. Arg-79 provides a ligand contact to isopentenyl diphosphate. Lys-156, Thr-157, Gln-190, Lys-207, and Lys-217 together coordinate dimethylallyl diphosphate.

The protein belongs to the FPP/GGPP synthase family. It depends on Mg(2+) as a cofactor.

The protein localises to the cytoplasm. It catalyses the reaction isopentenyl diphosphate + dimethylallyl diphosphate = (2E)-geranyl diphosphate + diphosphate. It carries out the reaction isopentenyl diphosphate + (2E)-geranyl diphosphate = (2E,6E)-farnesyl diphosphate + diphosphate. The catalysed reaction is isopentenyl diphosphate + (2E,6E)-farnesyl diphosphate = (2E,6E,10E)-geranylgeranyl diphosphate + diphosphate. Its pathway is isoprenoid biosynthesis; farnesyl diphosphate biosynthesis; farnesyl diphosphate from geranyl diphosphate and isopentenyl diphosphate: step 1/1. It participates in isoprenoid biosynthesis; geranyl diphosphate biosynthesis; geranyl diphosphate from dimethylallyl diphosphate and isopentenyl diphosphate: step 1/1. It functions in the pathway isoprenoid biosynthesis; geranylgeranyl diphosphate biosynthesis; geranylgeranyl diphosphate from farnesyl diphosphate and isopentenyl diphosphate: step 1/1. Its function is as follows. Catalyzes the trans-addition of the three molecules of IPP onto DMAPP to form geranylgeranyl pyrophosphate. This Mucor circinelloides f. lusitanicus (Mucor racemosus var. lusitanicus) protein is Geranylgeranyl pyrophosphate synthase.